The sequence spans 834 residues: ATP-dependent 6-phosphofructokinase (834 aa).

The tract at residues 1 to 426 (MTTTSKIIND…FYEIFIACSN (426 aa)) is N-terminal catalytic PFK domain 1. ATP contacts are provided by residues Gly62, 123–124 (RS), and 153–156 (GDGS). Mg(2+) is bound at residue Asp154. Residues 199-201 (SID), Arg236, 243-245 (MGR), Glu299, Arg326, and 332-335 (HVQR) contribute to the substrate site. Catalysis depends on Asp201, which acts as the Proton acceptor. Residues 427 to 437 (LHRRKVESKGM) form an interdomain linker region. The segment at 438–834 (GVLILHSGGP…DPNVNPQFTL (397 aa)) is C-terminal regulatory PFK domain 2. Beta-D-fructose 2,6-bisphosphate contacts are provided by residues Arg507, 566-570 (TIANN), Arg603, 610-612 (MGA), Glu666, Arg692, 698-701 (HLQQ), and Arg764. Residues 799-834 (SNLSEQDRPIKKSDISSPTSYSQKTFDPNVNPQFTL) form a disordered region. Over residues 803–812 (EQDRPIKKSD) the composition is skewed to basic and acidic residues. Positions 813 to 834 (ISSPTSYSQKTFDPNVNPQFTL) are enriched in polar residues.

It belongs to the phosphofructokinase type A (PFKA) family. ATP-dependent PFK group I subfamily. Eukaryotic two domain clade 'E' sub-subfamily. Homotetramer. Mg(2+) is required as a cofactor. The N-terminus is blocked.

Its subcellular location is the cytoplasm. It catalyses the reaction beta-D-fructose 6-phosphate + ATP = beta-D-fructose 1,6-bisphosphate + ADP + H(+). It functions in the pathway carbohydrate degradation; glycolysis; D-glyceraldehyde 3-phosphate and glycerone phosphate from D-glucose: step 3/4. Allosterically activated by ADP, AMP, or fructose 2,6-bisphosphate, and allosterically inhibited by ATP or citrate. Functionally, catalyzes the phosphorylation of D-fructose 6-phosphate to fructose 1,6-bisphosphate by ATP, the first committing step of glycolysis. This is ATP-dependent 6-phosphofructokinase (pfkA) from Dictyostelium discoideum (Social amoeba).